Consider the following 537-residue polypeptide: uncharacterized protein (537 aa).

4 disordered regions span residues 1-33 (MEPG…ILAF), 71-98 (SSPP…RKRQ), 197-220 (SHNN…SEEK), and 516-537 (GRQR…EEQN). S72 carries the post-translational modification Phosphoserine. A compositionally biased stretch (basic and acidic residues) spans 88 to 98 (SRVDSEARKRQ). Over residues 197 to 214 (SHNNMASSNTQSNTQLSE) the composition is skewed to polar residues. A compositionally biased stretch (basic residues) spans 516–529 (GRQRSSRYKSHVHK).

The protein belongs to the NAD kinase family.

This is an uncharacterized protein from Schizosaccharomyces pombe (strain 972 / ATCC 24843) (Fission yeast).